The chain runs to 218 residues: Thiamine-phosphate synthase (218 aa).

4-amino-2-methyl-5-(diphosphooxymethyl)pyrimidine contacts are provided by residues 43–47 (QLRMK) and Asn-75. Asp-76 and Asp-95 together coordinate Mg(2+). Thr-114 lines the 4-amino-2-methyl-5-(diphosphooxymethyl)pyrimidine pocket. 140 to 142 (TST) serves as a coordination point for 2-[(2R,5Z)-2-carboxy-4-methylthiazol-5(2H)-ylidene]ethyl phosphate. 4-amino-2-methyl-5-(diphosphooxymethyl)pyrimidine is bound at residue Lys-143. 2-[(2R,5Z)-2-carboxy-4-methylthiazol-5(2H)-ylidene]ethyl phosphate contacts are provided by residues Gly-171 and 191 to 192 (VS).

The protein belongs to the thiamine-phosphate synthase family. It depends on Mg(2+) as a cofactor.

The catalysed reaction is 2-[(2R,5Z)-2-carboxy-4-methylthiazol-5(2H)-ylidene]ethyl phosphate + 4-amino-2-methyl-5-(diphosphooxymethyl)pyrimidine + 2 H(+) = thiamine phosphate + CO2 + diphosphate. It catalyses the reaction 2-(2-carboxy-4-methylthiazol-5-yl)ethyl phosphate + 4-amino-2-methyl-5-(diphosphooxymethyl)pyrimidine + 2 H(+) = thiamine phosphate + CO2 + diphosphate. It carries out the reaction 4-methyl-5-(2-phosphooxyethyl)-thiazole + 4-amino-2-methyl-5-(diphosphooxymethyl)pyrimidine + H(+) = thiamine phosphate + diphosphate. It participates in cofactor biosynthesis; thiamine diphosphate biosynthesis; thiamine phosphate from 4-amino-2-methyl-5-diphosphomethylpyrimidine and 4-methyl-5-(2-phosphoethyl)-thiazole: step 1/1. Condenses 4-methyl-5-(beta-hydroxyethyl)thiazole monophosphate (THZ-P) and 2-methyl-4-amino-5-hydroxymethyl pyrimidine pyrophosphate (HMP-PP) to form thiamine monophosphate (TMP). This chain is Thiamine-phosphate synthase, found in Myxococcus xanthus (strain DK1622).